Consider the following 96-residue polypeptide: Large ribosomal subunit protein bL28 (96 aa).

Residues 1–22 (MSRSCELTGKGVQSGNNVSHAN) are compositionally biased toward polar residues. The interval 1–24 (MSRSCELTGKGVQSGNNVSHANNK) is disordered.

It belongs to the bacterial ribosomal protein bL28 family.

The sequence is that of Large ribosomal subunit protein bL28 from Rhizobium meliloti (strain 1021) (Ensifer meliloti).